The following is a 1375-amino-acid chain: BNI1-related protein 1 (1375 aa).

The region spanning 94 to 490 (CMPQDASLVE…YLIDSFQVST (397 aa)) is the GBD/FH3 domain. Residues 520-601 (QSDEIARRAV…ITTHQRLYDQ (82 aa)) adopt a coiled-coil conformation. Ser621 is subject to Phosphoserine. Positions 659 to 851 (SSYLTDANNE…LVTPPAPPLP (193 aa)) constitute an FH1 domain. Residues 661–684 (YLTDANNENESQNESEDKSKDSLF) form a disordered region. Residue Ser751 is modified to Phosphoserine. Disordered stretches follow at residues 764 to 785 (KLPQ…QSLL), 817 to 839 (AVPP…GPSN), and 1285 to 1309 (KSLL…GEKV). Pro residues-rich tracts occupy residues 767–781 (QLPP…PPLP) and 818–828 (VPPPPPPPPLP). Residues 868–1290 (DLKPPPTEKR…YEQRKSLLDM (423 aa)) form the FH2 domain. The 35-residue stretch at 1302–1336 (DENDGEKVNRDAVDLLISKLREVKKDPEPLRRRKS) folds into the DAD domain.

It belongs to the formin homology family. BNI1 subfamily. As to quaternary structure, interacts with profilin at the FH1 domain.

May organize microtubules by mediating spindle positioning and movement in the budding process. Potential target of the RHO family members. The protein is BNI1-related protein 1 (BNR1) of Saccharomyces cerevisiae (strain ATCC 204508 / S288c) (Baker's yeast).